Here is a 657-residue protein sequence, read N- to C-terminus: Chemoreceptor McpA (657 aa).

Over 1–5 (MKRIR) the chain is Cytoplasmic. A helical membrane pass occupies residues 6–29 (LVDLPLIIKIGFAPAFALLMLAVM). At 30-188 (AGGAILVQKS…ESESAKRQAQ (159 aa)) the chain is on the periplasmic side. The helical transmembrane segment at 189–212 (ATAAMSVTIIMSLLTLGAVGALAF) threads the bilayer. Over 213–657 (LTVMTTRKSI…APASDGWEEF (445 aa)) the chain is Cytoplasmic. HAMP domains follow at residues 216 to 269 (MTTR…HLEQ) and 297 to 349 (QEAS…ETMK). The Methyl-accepting transducer domain maps to 354–583 (STDGLSTGAD…QSTAATHSLK (230 aa)). Gln378 carries the glutamate methyl ester (Gln) modification. Glu385 and Glu392 each carry glutamate methyl ester (Glu). Gln574 is subject to Glutamate methyl ester (Gln). The disordered stretch occupies residues 634 to 657 (ARPGRSSGSAALAQAPASDGWEEF).

It belongs to the methyl-accepting chemotaxis (MCP) protein family.

The protein localises to the cell membrane. In terms of biological role, chemotactic-signal transducers respond to changes in the concentration of attractants and repellents in the environment, transduce a signal from the outside to the inside of the cell, and facilitate sensory adaptation through the variation of the level of methylation. Attractants increase the level of methylation while repellents decrease the level of methylation. The polypeptide is Chemoreceptor McpA (mcpA) (Caulobacter vibrioides (strain ATCC 19089 / CIP 103742 / CB 15) (Caulobacter crescentus)).